The following is a 517-amino-acid chain: Lysine--tRNA ligase (517 aa).

The tract at residues 1-21 is disordered; the sequence is MTEPNRAQAPAQNKAAADTPA. Residues 7–20 show a composition bias toward low complexity; it reads AQAPAQNKAAADTP. Mg(2+)-binding residues include E427 and E434.

The protein belongs to the class-II aminoacyl-tRNA synthetase family. As to quaternary structure, homodimer. Mg(2+) is required as a cofactor.

The protein resides in the cytoplasm. The enzyme catalyses tRNA(Lys) + L-lysine + ATP = L-lysyl-tRNA(Lys) + AMP + diphosphate. The polypeptide is Lysine--tRNA ligase (Cupriavidus taiwanensis (strain DSM 17343 / BCRC 17206 / CCUG 44338 / CIP 107171 / LMG 19424 / R1) (Ralstonia taiwanensis (strain LMG 19424))).